The sequence spans 117 residues: Ig heavy chain V region MOPC 173 (117 aa).

An Ig-like domain is found at 1–116 (EVKLLESGGP…WGQGTSVTVS (116 aa)). Residues Cys22 and Cys96 are joined by a disulfide bond.

This is Ig heavy chain V region MOPC 173 from Mus musculus (Mouse).